We begin with the raw amino-acid sequence, 288 residues long: Cyclic UMP-AMP synthase (288 aa).

The interval 1–23 (MPVPESQLERWSHQGATTTAKKT) is disordered. Gln-46 provides a ligand contact to UTP. Residue 46–48 (QGS) participates in ATP binding. Residues Asp-60 and Asp-62 each contribute to the Mg(2+) site. UTP is bound by residues Asp-62 and 116 to 120 (RKTLK). Asp-129 is a binding site for Mg(2+). Residue Asn-166 participates in UTP binding. 3 residues coordinate ATP: Lys-194, Ser-212, and Glu-265.

The protein belongs to the CD-NTase family. E01 subfamily. The cofactor is Mg(2+).

It carries out the reaction UTP + ATP = 3',3'-cUAMP + 2 diphosphate. Cyclic nucleotide synthase (second messenger synthase) of a CBASS antivirus system. CBASS (cyclic oligonucleotide-based antiphage signaling system) provides immunity against bacteriophage. The CD-NTase protein synthesizes cyclic nucleotides in response to infection; these serve as specific second messenger signals. The signals activate a diverse range of effectors, leading to bacterial cell death and thus abortive phage infection. A type I-B(UU) CBASS system. Its function is as follows. Cyclic dinucleotide synthase that catalyzes the synthesis of 3'3'-cyclic UMP-AMP (cUMP-AMP) from UTP and ATP, a second messenger for cell signal transduction. This chain is Cyclic UMP-AMP synthase, found in Rhodothermus marinus (strain SG0.5JP17-172).